We begin with the raw amino-acid sequence, 200 residues long: Recombination protein RecR (200 aa).

Residues C60–C75 form a C4-type zinc finger. Residues T83–P177 form the Toprim domain.

The protein belongs to the RecR family.

In terms of biological role, may play a role in DNA repair. It seems to be involved in an RecBC-independent recombinational process of DNA repair. It may act with RecF and RecO. The protein is Recombination protein RecR of Francisella tularensis subsp. tularensis (strain SCHU S4 / Schu 4).